A 155-amino-acid chain; its full sequence is Small ribosomal subunit protein uS7 (155 aa).

It belongs to the universal ribosomal protein uS7 family. As to quaternary structure, part of the 30S ribosomal subunit. Contacts proteins S9 and S11.

In terms of biological role, one of the primary rRNA binding proteins, it binds directly to 16S rRNA where it nucleates assembly of the head domain of the 30S subunit. Is located at the subunit interface close to the decoding center, probably blocks exit of the E-site tRNA. This Thermotoga petrophila (strain ATCC BAA-488 / DSM 13995 / JCM 10881 / RKU-1) protein is Small ribosomal subunit protein uS7.